We begin with the raw amino-acid sequence, 451 residues long: Probable D-serine dehydratase (451 aa).

The interval 1 to 55 (MPGRTRPSCRLAITFTPRPDSATPRAGRAAPATGRRSNRSRSTLSATASPMPRRP) is disordered. The segment covering 22 to 35 (ATPRAGRAAPATGR) has biased composition (low complexity). The residue at position 118 (K118) is an N6-(pyridoxal phosphate)lysine.

This sequence belongs to the serine/threonine dehydratase family. DsdA subfamily. Requires pyridoxal 5'-phosphate as cofactor.

The catalysed reaction is D-serine = pyruvate + NH4(+). This Paracidovorax citrulli (strain AAC00-1) (Acidovorax citrulli) protein is Probable D-serine dehydratase.